We begin with the raw amino-acid sequence, 85 residues long: Small ribosomal subunit protein uS17 (85 aa).

It belongs to the universal ribosomal protein uS17 family. Part of the 30S ribosomal subunit.

Functionally, one of the primary rRNA binding proteins, it binds specifically to the 5'-end of 16S ribosomal RNA. The polypeptide is Small ribosomal subunit protein uS17 (Ruminiclostridium cellulolyticum (strain ATCC 35319 / DSM 5812 / JCM 6584 / H10) (Clostridium cellulolyticum)).